A 573-amino-acid chain; its full sequence is Putative adenine deaminase PTO1085 (573 aa).

The protein belongs to the metallo-dependent hydrolases superfamily. Adenine deaminase family.

It catalyses the reaction adenine + H2O + H(+) = hypoxanthine + NH4(+). This Picrophilus torridus (strain ATCC 700027 / DSM 9790 / JCM 10055 / NBRC 100828 / KAW 2/3) protein is Putative adenine deaminase PTO1085.